The sequence spans 476 residues: Elongation factor Tu, chloroplastic (476 aa).

The N-terminal 67 residues, Met-1–Arg-67, are a transit peptide targeting the chloroplast. Positions Lys-77–Gln-281 constitute a tr-type G domain. The G1 stretch occupies residues Gly-86–Thr-93. Position 86 to 93 (Gly-86 to Thr-93) interacts with GTP. Thr-94 carries the phosphothreonine modification. The tract at residues Gly-127 to Asn-131 is G2. The segment at Asp-148 to Gly-151 is G3. GTP is bound by residues Asp-148 to His-152 and Asn-203 to Asp-206. The G4 stretch occupies residues Asn-203 to Asp-206. The tract at residues Ser-241–Leu-243 is G5.

Belongs to the TRAFAC class translation factor GTPase superfamily. Classic translation factor GTPase family. EF-Tu/EF-1A subfamily. In terms of assembly, interacts with PI5K2. Interacts with APD2.

Its subcellular location is the plastid. The protein localises to the chloroplast. In terms of biological role, this protein promotes the GTP-dependent binding of aminoacyl-tRNA to the A-site of ribosomes during protein biosynthesis. This Arabidopsis thaliana (Mouse-ear cress) protein is Elongation factor Tu, chloroplastic (TUFA).